The following is an 84-amino-acid chain: U4-theraphotoxin-Hhn1a (84 aa).

Residues 1-22 (MKVTLIAIPTCAAVLVLHTTAA) form the signal peptide. Residues 23-47 (EELEESQLMEVGMPDTELAAVDEER) constitute a propeptide that is removed on maturation. Cystine bridges form between C51-C65, C55-C76, and C70-C81.

This sequence belongs to the neurotoxin 12 (Hwtx-2) family. 02 (Hwtx-2) subfamily. Expressed by the venom gland.

The protein localises to the secreted. In terms of biological role, postsynaptic neurotoxin. This Cyriopagopus hainanus (Chinese bird spider) protein is U4-theraphotoxin-Hhn1a.